We begin with the raw amino-acid sequence, 119 residues long: FAD-linked sulfhydryl oxidase (119 aa).

Residues 1 to 97 form the ERV/ALR sulfhydryl oxidase domain; the sequence is MLHWGPKYWR…ISWSEYKNIY (97 aa). C44 and C47 are disulfide-bonded.

It belongs to the asfivirus B119L family. In terms of assembly, interacts with A151R. Requires FAD as cofactor.

Its subcellular location is the host cytoplasm. The protein localises to the virion. It catalyses the reaction 2 R'C(R)SH + O2 = R'C(R)S-S(R)CR' + H2O2. In terms of biological role, FAD-dependent sulfhydryl oxidase that catalyzes the formation of disulfide bonds in viral proteins produced in the cell cytoplasm. Involved in virion maturation. The sequence is that of FAD-linked sulfhydryl oxidase from African swine fever virus (isolate Warthog/Namibia/Wart80/1980) (ASFV).